Here is a 155-residue protein sequence, read N- to C-terminus: MSEQNNTEMAFQIQRIYTKDVSFEAPNAPHVFQKDWQPEVKLDLDTASSQLADDVYEVVLRVTVTASLGEETAFLCEVQQAGIFSISGIEGTQMAHCLGAYCPNILFPYARECITSLVSRGTFPQLNLAPVNFDALFMNYLQQQAGEGTEEHQDA.

The protein belongs to the SecB family. As to quaternary structure, homotetramer, a dimer of dimers. One homotetramer interacts with 1 SecA dimer.

It localises to the cytoplasm. Its function is as follows. One of the proteins required for the normal export of preproteins out of the cell cytoplasm. It is a molecular chaperone that binds to a subset of precursor proteins, maintaining them in a translocation-competent state. It also specifically binds to its receptor SecA. The chain is Protein-export protein SecB from Salmonella heidelberg (strain SL476).